The chain runs to 241 residues: Uridylate kinase (241 aa).

ATP is bound at residue 12–15 (KVSG). An involved in allosteric activation by GTP region spans residues 20-25 (GEKGTG). Gly54 is a binding site for UMP. ATP contacts are provided by Gly55 and Arg59. UMP is bound by residues Asp74 and 135 to 142 (TGNPYFST). Asn163, Tyr169, and Asp172 together coordinate ATP.

It belongs to the UMP kinase family. In terms of assembly, homohexamer.

It is found in the cytoplasm. The catalysed reaction is UMP + ATP = UDP + ADP. It functions in the pathway pyrimidine metabolism; CTP biosynthesis via de novo pathway; UDP from UMP (UMPK route): step 1/1. Its activity is regulated as follows. Allosterically activated by GTP. Inhibited by UTP. Catalyzes the reversible phosphorylation of UMP to UDP. In Lactobacillus johnsonii (strain CNCM I-12250 / La1 / NCC 533), this protein is Uridylate kinase.